The chain runs to 504 residues: Ammonium transporter 1 member 4 (504 aa).

The next 12 membrane-spanning stretches (helical) occupy residues L12 to I32, L55 to G75, V90 to G110, Y136 to A156, F161 to H181, F207 to I227, L251 to F271, A292 to G314, I318 to I338, V344 to C364, L377 to F397, and V430 to I450. At T471 the chain carries Phosphothreonine.

Belongs to the ammonia transporter channel (TC 1.A.11.2) family. In terms of tissue distribution, specifically expressed in pollen grains and tubes.

It is found in the cell membrane. High affinity ammonium transporter in the plasma membrane. The chain is Ammonium transporter 1 member 4 (AMT1-4) from Arabidopsis thaliana (Mouse-ear cress).